The following is a 221-amino-acid chain: Small ribosomal subunit protein uS5 (221 aa).

One can recognise an S5 DRBM domain in the interval 46–109 (IKDEVIDIKR…INAKLNIMEI (64 aa)).

The protein belongs to the universal ribosomal protein uS5 family. Part of the 30S ribosomal subunit. Contacts protein S4.

In terms of biological role, with S4 and S12 plays an important role in translational accuracy. The chain is Small ribosomal subunit protein uS5 from Thermoplasma volcanium (strain ATCC 51530 / DSM 4299 / JCM 9571 / NBRC 15438 / GSS1).